The primary structure comprises 63 residues: Prokaryotic ubiquitin-like protein UBact (63 aa).

The tract at residues 1–63 is disordered; sequence MSGRSTFGRF…SRRYRQRTGE (63 aa). A compositionally biased stretch (basic and acidic residues) spans 17 to 50; the sequence is PWERKPGDDEGGPKRPKVERPDTNDLLKRMRRVD. Residue E63 forms an Isoglutamyl lysine isopeptide (Glu-Lys) (interchain with K-? in acceptor proteins) linkage.

Belongs to the ubiquitin-like protein UBact family.

Functionally, may function as a protein modifier covalently attached to lysine residues of substrate proteins. This may serve to target the modified proteins for degradation by proteasomes. This Handelsmanbacteria sp. (strain RIFCSPLOWO2_12_FULL_64_10) protein is Prokaryotic ubiquitin-like protein UBact.